A 331-amino-acid polypeptide reads, in one-letter code: MFTCINCTKMADRGEEDEEDEARGSTTPNTKEAVKSLTTQIKDMASKFSGSHKQSKPTPGSSSSNLRKFPDFDTASESVPYPYPGGSTSSTPAWDLPRSSYHQSGRPDSRFTSMYGGERESISAQSCDVVLEDDEPKEWMAQVEPGVHITFVSLPSGGNDLKRIRFSREVFDKWQAQRWWGENYDRIVELYNVQRFNRQALQTPGRSEDQSQRDSTYTRIDSARESRDWTQRDNNFRPPGGSVPHHFYGPPMDAARITTSSRDEPPSMSNASEMQGEWVEEDEPGVYITIRQLPDGTRELRRVRFSRERFGEVHAKTWWEQNRDRIQTQYL.

Residues 1 to 111 (MFTCINCTKM…HQSGRPDSRF (111 aa)) form a disordered region. Composition is skewed to polar residues over residues 25–41 (STTP…TTQI) and 48–66 (FSGS…SSNL). Positions 137–192 (KEWMAQVEPGVHITFVSLPSGGNDLKRIRFSREVFDKWQAQRWWGENYDRIVELYN) constitute a BRX 1 domain. Disordered regions lie at residues 201–246 (LQTP…VPHH) and 258–279 (TTSS…GEWV). Basic and acidic residues predominate over residues 221–235 (DSARESRDWTQRDNN). The 56-residue stretch at 276–331 (GEWVEEDEPGVYITIRQLPDGTRELRRVRFSRERFGEVHAKTWWEQNRDRIQTQYL) folds into the BRX 2 domain.

The protein belongs to the BRX family. As to quaternary structure, heterodimer with BRXL1. As to expression, expressed in roots.

It localises to the nucleus. In terms of biological role, may act as a regulator of cell proliferation and elongation in the root. The chain is Protein Brevis radix-like 1 (BRXL1) from Arabidopsis thaliana (Mouse-ear cress).